The following is a 157-amino-acid chain: Protein Smg homolog (157 aa).

The protein belongs to the Smg family.

The chain is Protein Smg homolog from Aliivibrio salmonicida (strain LFI1238) (Vibrio salmonicida (strain LFI1238)).